The primary structure comprises 479 residues: UDP-glycosyltransferase 85A8 (479 aa).

Residues serine 302, tryptophan 358 to cysteine 359, histidine 376 to glutamate 384, and phenylalanine 398 to glutamine 401 each bind UDP-alpha-D-glucose.

It belongs to the UDP-glycosyltransferase family.

In terms of biological role, may glycosylate diterpenes or flavonols in leaves. The polypeptide is UDP-glycosyltransferase 85A8 (Stevia rebaudiana (Stevia)).